The sequence spans 192 residues: Xanthine phosphoribosyltransferase (192 aa).

Xanthine-binding residues include leucine 20 and asparagine 27. Alanine 128–alanine 132 serves as a coordination point for 5-phospho-alpha-D-ribose 1-diphosphate. Residue lysine 156 participates in xanthine binding.

The protein belongs to the purine/pyrimidine phosphoribosyltransferase family. Xpt subfamily. Homodimer.

It is found in the cytoplasm. It catalyses the reaction XMP + diphosphate = xanthine + 5-phospho-alpha-D-ribose 1-diphosphate. It participates in purine metabolism; XMP biosynthesis via salvage pathway; XMP from xanthine: step 1/1. Functionally, converts the preformed base xanthine, a product of nucleic acid breakdown, to xanthosine 5'-monophosphate (XMP), so it can be reused for RNA or DNA synthesis. The polypeptide is Xanthine phosphoribosyltransferase (Lactobacillus gasseri (strain ATCC 33323 / DSM 20243 / BCRC 14619 / CIP 102991 / JCM 1131 / KCTC 3163 / NCIMB 11718 / NCTC 13722 / AM63)).